The following is a 458-amino-acid chain: tRNA modification GTPase MnmE (458 aa).

Positions 22, 86, and 125 each coordinate (6S)-5-formyl-5,6,7,8-tetrahydrofolate. Positions 221-379 (GIRTVILGRP…LEQTITEMFF (159 aa)) constitute a TrmE-type G domain. Asn231 contacts K(+). Residues 231-236 (NAGKSS), 250-256 (TEIAGTT), and 275-278 (DTAG) contribute to the GTP site. Residue Ser235 participates in Mg(2+) binding. K(+) is bound by residues Thr250, Ile252, and Thr255. A Mg(2+)-binding site is contributed by Thr256. Lys458 contacts (6S)-5-formyl-5,6,7,8-tetrahydrofolate.

The protein belongs to the TRAFAC class TrmE-Era-EngA-EngB-Septin-like GTPase superfamily. TrmE GTPase family. In terms of assembly, homodimer. Heterotetramer of two MnmE and two MnmG subunits. Requires K(+) as cofactor.

It is found in the cytoplasm. Functionally, exhibits a very high intrinsic GTPase hydrolysis rate. Involved in the addition of a carboxymethylaminomethyl (cmnm) group at the wobble position (U34) of certain tRNAs, forming tRNA-cmnm(5)s(2)U34. This Lachnoclostridium phytofermentans (strain ATCC 700394 / DSM 18823 / ISDg) (Clostridium phytofermentans) protein is tRNA modification GTPase MnmE.